Consider the following 340-residue polypeptide: Thioesterase pkgB (340 aa).

The Zn(2+) site is built by H97, H99, D101, H102, and H205. Residue D101 is the Proton donor/acceptor of the active site. Residues 242 to 258 (SSRNGGSTSSIGSVSES) are compositionally biased toward low complexity. Residues 242 to 271 (SSRNGGSTSSIGSVSESGDSDEEDNNMKTS) form a disordered region.

Belongs to the metallo-beta-lactamase superfamily. It depends on Zn(2+) as a cofactor.

It catalyses the reaction 3,5,7,9,11,13-hexaoxotetradecanoyl-[ACP] = dehydrocitreoisocoumarin + holo-[ACP] + H2O. The catalysed reaction is 3,5,7,9,11-pentaoxododecanoyl-[ACP] = 6,8-dihydroxy-3-(2-oxopropyl)-isocoumarin + holo-[ACP] + H2O. Thioesterase; part of the pkg gene cluster that mediates the biosynthesis of dihydrocitreoisocoumarin and 6,8-dihydroxy-3-(2-oxopropyl)-isocoumarin. The non-reducing polyketide synthase pkgA performs the condensation of one acetyl-CoA starter unit with 6 and 5 malonyl-CoA units, respectively. As pkgA lacks a releasing domain, the thioesterase pkgB is necessary to break the thioester bond and release dihydrocitreoisocoumarin and 6,8-dihydroxy-3-(2-oxopropyl)-isocoumarin from pkgA. This is Thioesterase pkgB from Emericella nidulans (strain FGSC A4 / ATCC 38163 / CBS 112.46 / NRRL 194 / M139) (Aspergillus nidulans).